A 427-amino-acid polypeptide reads, in one-letter code: Interleukin-13 receptor subunit alpha-1 (427 aa).

The N-terminal stretch at 1 to 21 (MEWPARLCGLWALLLCAGGGG) is a signal peptide. The Extracellular portion of the chain corresponds to 22-343 (GGGGAAPTET…MSIGKKRNST (322 aa)). 3 Fibronectin type-III domains span residues 34 to 123 (PVTN…PPEG), 128 to 226 (AVTE…TSRV), and 227 to 339 (KPDP…IGKK). N-linked (GlcNAc...) asparagine glycosylation is found at asparagine 37 and asparagine 61. 3 disulfides stabilise this stretch: cysteine 62–cysteine 102, cysteine 95–cysteine 117, and cysteine 134–cysteine 144. Residues asparagine 105, asparagine 138, and asparagine 157 are each glycosylated (N-linked (GlcNAc...) asparagine). Cysteine 173 and cysteine 185 are oxidised to a cystine. Asparagine 235, asparagine 265, asparagine 293, asparagine 329, and asparagine 341 each carry an N-linked (GlcNAc...) asparagine glycan. 2 disulfide bridges follow: cysteine 257–cysteine 320 and cysteine 282–cysteine 296. Residues 327 to 331 (WSNWS) carry the WSXWS motif motif. The helical transmembrane segment at 344–367 (LYITMLLIVPVIVAGAIIVLLLYL) threads the bilayer. The Cytoplasmic segment spans residues 368–427 (KRLKIIIFPPIPDPGKIFKEMFGDQNDDTLHWKKYDIYEKQTKEETDSVVLIENLKKASQ). Positions 374–382 (IFPPIPDPG) match the Box 1 motif motif.

This sequence belongs to the type I cytokine receptor family. Type 5 subfamily. As to quaternary structure, interleukin-13 receptor is a complex of IL4R, IL13RA1, and possibly other components. Interacts with TRAF3IP1. Interacts with IL4. Ubiquitous. Highest levels in heart, liver, skeletal muscle and ovary; lowest levels in brain, lung and kidney. Also found in B-cells, T-cells and endothelial cells.

It localises to the membrane. Functionally, binds with low affinity to interleukin-13 (IL13). Together with IL4RA can form a functional receptor for IL13. Also serves as an alternate accessory protein to the common cytokine receptor gamma chain for interleukin-4 (IL4) signaling, but cannot replace the function of IL2RG in allowing enhanced interleukin-2 (IL2) binding activity. The polypeptide is Interleukin-13 receptor subunit alpha-1 (IL13RA1) (Homo sapiens (Human)).